The following is a 367-amino-acid chain: UDP-N-acetylglucosamine--N-acetylmuramyl-(pentapeptide) pyrophosphoryl-undecaprenol N-acetylglucosamine transferase (367 aa).

UDP-N-acetyl-alpha-D-glucosamine contacts are provided by residues T13–G15, N125, R165, S192, and Q293.

Belongs to the glycosyltransferase 28 family. MurG subfamily.

The protein resides in the cell inner membrane. The enzyme catalyses di-trans,octa-cis-undecaprenyl diphospho-N-acetyl-alpha-D-muramoyl-L-alanyl-D-glutamyl-meso-2,6-diaminopimeloyl-D-alanyl-D-alanine + UDP-N-acetyl-alpha-D-glucosamine = di-trans,octa-cis-undecaprenyl diphospho-[N-acetyl-alpha-D-glucosaminyl-(1-&gt;4)]-N-acetyl-alpha-D-muramoyl-L-alanyl-D-glutamyl-meso-2,6-diaminopimeloyl-D-alanyl-D-alanine + UDP + H(+). It functions in the pathway cell wall biogenesis; peptidoglycan biosynthesis. In terms of biological role, cell wall formation. Catalyzes the transfer of a GlcNAc subunit on undecaprenyl-pyrophosphoryl-MurNAc-pentapeptide (lipid intermediate I) to form undecaprenyl-pyrophosphoryl-MurNAc-(pentapeptide)GlcNAc (lipid intermediate II). The sequence is that of UDP-N-acetylglucosamine--N-acetylmuramyl-(pentapeptide) pyrophosphoryl-undecaprenol N-acetylglucosamine transferase from Jannaschia sp. (strain CCS1).